A 1249-amino-acid polypeptide reads, in one-letter code: Protein lingerer (1249 aa).

A disordered region spans residues 1 to 66; the sequence is MSTQTRSGGG…VVKAKQPTAE (66 aa). 2 stretches are compositionally biased toward gly residues: residues 7–30 and 38–50; these read SGGGGGGGGRNKEAGGGSGGGAAG and GSTGAASGAGAGG. The region spanning 84-124 is the UBA domain; sequence KIQEKIQSLMETTQRSEEEVCCALQECDSDLDRAVIFLLET. Disordered stretches follow at residues 132 to 312, 350 to 375, 454 to 506, 549 to 579, 616 to 717, 738 to 922, 1016 to 1042, 1124 to 1149, 1164 to 1186, and 1211 to 1249; these read TTSK…LKPE, SAGAGAQQQQSQQSTQTGVPPAASNV, MPPM…PPTT, YAAAATQQPPVRRQRARVPPPSKIPSSAVEM, TTGT…TSVS, PYGQ…SLPI, GRFTRTDNNSSPVSNVPSSLSQQTGSG, QQQSKGQTVANQQSGSGSGSDMAPSM, KQSFHSGTPPPYNIAGTQTAGTT, and QNMHQDSNSSGQRPQNNNQGKTASKQQGYSASTYWTGPN. Positions 186–209 are enriched in gly residues; it reads NRGGSGNQRSGGPGRGGRAGGYRD. A compositionally biased stretch (basic and acidic residues) spans 210 to 227; that stretch reads GGGDRDRDRDRNGYDKGG. 2 stretches are compositionally biased toward gly residues: residues 228–240 and 248–269; these read EGGGYRNRAGGDG and DGPGGPGRGNYGSRGGRGGGPR. The segment covering 350–369 has biased composition (low complexity); the sequence is SAGAGAQQQQSQQSTQTGVP. Positions 457–494 are enriched in polar residues; sequence MNTSSSLSAEQSQYFSTLSSQNSNLQPTPSAVGFQQQP. Composition is skewed to low complexity over residues 549-559, 616-639, and 647-664; these read YAAAATQQPPV, TTGTAGSSTVQQQQQGAQVPPATV, and QSQLQQQQQQVVSQAPQQ. Residues 678–705 show a composition bias toward polar residues; sequence ASSQIMPGQGTTEALSSQNDGLANSYSR. Residues 706-717 show a composition bias toward low complexity; that stretch reads TNASGSVSTSVS. Composition is skewed to polar residues over residues 738-769 and 777-809; these read PYGQSASTNTALTGGYQNAPYSSTQANKTASY and GYNNMSYSNNQVTNAYPPSTNNYSSYNQGNVNA. Residues 811–861 show a composition bias toward low complexity; sequence QPPSSSVTNNVVPNNNTGNSVGGVSNQSNLPVNNNAVNSSSNNNAGGYLSS. The segment covering 862 to 873 has biased composition (polar residues); the sequence is QYPVSQTSSAFP. Low complexity-rich tracts occupy residues 874–884, 892–922, and 1023–1034; these read SQQNYQNSSQN, NSNTGVASSTVSNSSTNNSNNNVTSSSSLPI, and NNSSPVSNVPSS. A compositionally biased stretch (polar residues) spans 1124–1138; that stretch reads QQQSKGQTVANQQSG. The span at 1216–1249 shows a compositional bias: polar residues; that stretch reads DSNSSGQRPQNNNQGKTASKQQGYSASTYWTGPN.

Its subcellular location is the cytoplasm. Functionally, acts in the nervous system to mediate the control of copulatory organs during courtship. The sequence is that of Protein lingerer from Anopheles gambiae (African malaria mosquito).